Here is a 296-residue protein sequence, read N- to C-terminus: Protoheme IX farnesyltransferase 1 (296 aa).

8 helical membrane passes run 14–34, 41–61, 86–106, 108–128, 141–161, 165–185, 230–250, and 274–294; these read IVLL…ALSA, LWDY…SSAL, IGEN…VVYA, FLLN…YVII, IVIG…AATG, LLGF…FWCL, AFGM…LMLV, and YLTI…PFPF.

The protein belongs to the UbiA prenyltransferase family. Protoheme IX farnesyltransferase subfamily.

It is found in the cell membrane. It carries out the reaction heme b + (2E,6E)-farnesyl diphosphate + H2O = Fe(II)-heme o + diphosphate. The protein operates within porphyrin-containing compound metabolism; heme O biosynthesis; heme O from protoheme: step 1/1. Its function is as follows. Converts heme B (protoheme IX) to heme O by substitution of the vinyl group on carbon 2 of heme B porphyrin ring with a hydroxyethyl farnesyl side group. The sequence is that of Protoheme IX farnesyltransferase 1 from Cenarchaeum symbiosum (strain A).